Reading from the N-terminus, the 148-residue chain is Large ribosomal subunit protein bL9 (148 aa).

It belongs to the bacterial ribosomal protein bL9 family.

Functionally, binds to the 23S rRNA. The polypeptide is Large ribosomal subunit protein bL9 (Hydrogenobaculum sp. (strain Y04AAS1)).